A 23-amino-acid chain; its full sequence is Aurein-4.1 (23 aa).

The protein belongs to the frog skin active peptide (FSAP) family. Aurein subfamily. As to expression, expressed by the skin dorsal glands.

Its subcellular location is the secreted. Functionally, has no antimicrobial or anticancer activity. The protein is Aurein-4.1 of Ranoidea aurea (Green and golden bell frog).